A 358-amino-acid polypeptide reads, in one-letter code: Sulfoquinovosyl glycerol transport ATP-binding protein SmoE (358 aa).

In terms of domain architecture, ABC transporter spans 4–234 (VSLRKLDKSY…PESVFVGGFV (231 aa)). ATP is bound at residue 36–43 (GPSGCGKS).

The protein belongs to the ABC transporter superfamily. The complex is probably composed of two ATP-binding proteins (SmoE), two transmembrane proteins (SmoG and SmoH) and a solute-binding protein (SmoF).

It is found in the cell inner membrane. In terms of biological role, part of the ABC transporter complex SmoEFGH involved in sulfoquinovosyl glycerol (SQGro) uptake. Responsible for energy coupling to the transport system. The chain is Sulfoquinovosyl glycerol transport ATP-binding protein SmoE from Agrobacterium fabrum (strain C58 / ATCC 33970) (Agrobacterium tumefaciens (strain C58)).